The sequence spans 164 residues: ATP synthase subunit b (164 aa).

The helical transmembrane segment at 4-24 (IHFDLTLVVQVLSFLLLVYIL) threads the bilayer.

Belongs to the ATPase B chain family. F-type ATPases have 2 components, F(1) - the catalytic core - and F(0) - the membrane proton channel. F(1) has five subunits: alpha(3), beta(3), gamma(1), delta(1), epsilon(1). F(0) has three main subunits: a(1), b(2) and c(10-14). The alpha and beta chains form an alternating ring which encloses part of the gamma chain. F(1) is attached to F(0) by a central stalk formed by the gamma and epsilon chains, while a peripheral stalk is formed by the delta and b chains.

It is found in the cell membrane. F(1)F(0) ATP synthase produces ATP from ADP in the presence of a proton or sodium gradient. F-type ATPases consist of two structural domains, F(1) containing the extramembraneous catalytic core and F(0) containing the membrane proton channel, linked together by a central stalk and a peripheral stalk. During catalysis, ATP synthesis in the catalytic domain of F(1) is coupled via a rotary mechanism of the central stalk subunits to proton translocation. Its function is as follows. Component of the F(0) channel, it forms part of the peripheral stalk, linking F(1) to F(0). In Desulfitobacterium hafniense (strain Y51), this protein is ATP synthase subunit b.